The sequence spans 359 residues: 4-galactosyl-N-acetylglucosaminide 3-alpha-L-fucosyltransferase 9 (359 aa).

Residues 1 to 11 (MTSASKGILRP) are Cytoplasmic-facing. The helical; Signal-anchor for type II membrane protein transmembrane segment at 12-32 (FLIVCIILGCFMACLLIYIKP) threads the bilayer. At 33–359 (TNSWIFSPME…VGNLEKWFWN (327 aa)) the chain is on the lumenal side. The N-linked (GlcNAc...) asparagine glycan is linked to Asn-62. The acceptor-binding stretch occupies residues 63–168 (ETTILIWVWP…RRDSDIQVPY (106 aa)). Gln-75 lines the a beta-D-galactosyl-(1-&gt;4)-N-acetyl-beta-D-glucosaminyl derivative pocket. 3 disulfide bridges follow: Cys-82–Cys-335, Cys-91–Cys-338, and Cys-190–Cys-238. Asn-101 carries an N-linked (GlcNAc...) asparagine glycan. Residue Glu-137 participates in a beta-D-galactosyl-(1-&gt;4)-N-acetyl-beta-D-glucosaminyl derivative binding. Glu-137 (nucleophile) is an active-site residue. Glu-137 contacts GDP-beta-L-fucose. N-linked (GlcNAc...) asparagine glycosylation is present at Asn-153. GDP-beta-L-fucose-binding residues include Tyr-168, Val-192, Ser-194, Asn-195, Arg-202, Val-226, Tyr-241, Asn-246, Tyr-252, Glu-255, and Lys-256. The interval 169–326 (GFLTVSTNPF…NWRKDFTVNL (158 aa)) is donor-binding. The interval 327–359 (PRFWESHACLACDHVKRHQEYKSVGNLEKWFWN) is acceptor-binding.

Belongs to the glycosyltransferase 10 family. As to quaternary structure, homodimer. Post-translationally, N-glycosylated with complex-type N-glycans.

It localises to the golgi apparatus. Its subcellular location is the trans-Golgi network membrane. The protein localises to the golgi apparatus membrane. It catalyses the reaction a beta-D-galactosyl-(1-&gt;4)-N-acetyl-beta-D-glucosaminyl derivative + GDP-beta-L-fucose = a beta-D-galactosyl-(1-&gt;4)-[alpha-L-fucosyl-(1-&gt;3)]-N-acetyl-beta-D-glucosaminyl derivative + GDP + H(+). It carries out the reaction an alpha-Neu5Ac-(2-&gt;3)-beta-D-Gal-(1-&gt;4)-beta-D-GlcNAc-(1-&gt;3)-beta-D-Gal-(1-&gt;4)-beta-D-GlcNAc derivative + GDP-beta-L-fucose = an alpha-Neu5Ac-(2-&gt;3)-beta-D-Gal-(1-&gt;4)-beta-D-GlcNAc-(1-&gt;3)-beta-D-Gal-(1-&gt;4)-[alpha-L-Fuc-(1-&gt;3)]-beta-D-GlcNAc derivative + GDP + H(+). The enzyme catalyses alpha-N-glycoloylneuraminosyl-(2-&gt;3)-beta-D-galactosyl-(1-&gt;4)-N-acetyl-beta-D-glucosaminyl-(1-&gt;3)-beta-D-galactosyl-(1-&gt;4)-N-acetyl-beta-D-glucosaminyl-(1-&gt;3)-beta-D-galactosyl-(1-&gt;4)-beta-D-glucosyl-(1&lt;-&gt;1')-ceramide + GDP-beta-L-fucose = alpha-N-glycoloylneuraminosyl-(2-&gt;3)-beta-D-galactosyl-(1-&gt;4)-N-acetyl-beta-D-glucosaminyl-(1-&gt;3)-beta-D-galactosyl-(1-&gt;4)-[alpha-L-fucosyl-(1-&gt;3)]-N-acetyl-beta-D-glucosaminyl-(1-&gt;3)-beta-D-galactosyl-(1-&gt;4)-beta-D-glucosyl-(1&lt;-&gt;1')-ceramide + GDP + H(+). The catalysed reaction is alpha-D-galactosyl-(1-&gt;3)-beta-D-galactosyl-(1-&gt;4)-N-acetyl-beta-D-glucosaminyl-(1-&gt;3)-beta-D-galactosyl-(1-&gt;4)-beta-D-glucosyl-(1&lt;-&gt;1')-ceramide + GDP-beta-L-fucose = a neolactoside IV(3)-alpha-Gal,III(3)-alpha-Fuc-nLc4Cer + GDP + H(+). It catalyses the reaction a neolactoside nLc4Cer + GDP-beta-L-fucose = a neolactoside III(3)-alpha-Fuc-nLc4Cer + GDP + H(+). It carries out the reaction an N-acetyl-alpha-neuraminyl-(2-&gt;3)-beta-D-galactosyl-(1-&gt;4)-N-acetyl-beta-D-glucosaminyl derivative + GDP-beta-L-fucose = an alpha-Neu5Ac-(2-&gt;3)-beta-D-Gal-(1-&gt;4)-[alpha-L-Fuc-(1-&gt;3)]-beta-D-GlcNAc derivative + GDP + H(+). The enzyme catalyses beta-D-Gal-(1-&gt;4)-beta-D-GlcNAc-(1-&gt;3)-beta-D-Gal-(1-&gt;4)-D-Glc + GDP-beta-L-fucose = beta-D-Gal-(1-&gt;4)-[alpha-L-Fuc-(1-&gt;3)]-beta-D-GlcNAc-(1-&gt;3)-beta-D-Gal-(1-&gt;4)-D-Glc + GDP + H(+). The catalysed reaction is an alpha-L-Fuc-(1-&gt;2)-beta-D-Gal-(1-&gt;4)-beta-D-GlcNAc derivative + GDP-beta-L-fucose = an alpha-L-Fuc-(1-&gt;2)-beta-D-Gal-(1-&gt;4)-[alpha-L-Fuc-(1-&gt;3)]-beta-D-GlcNAc derivative + GDP + H(+). Its pathway is protein modification; protein glycosylation. It functions in the pathway glycolipid biosynthesis. With respect to regulation, activated by Mn2+. In terms of biological role, catalyzes alpha(1-&gt;3) linkage of fucosyl moiety transferred from GDP-beta-L-fucose to N-acetyl glucosamine (GlcNAc) within type 2 lactosamine (LacNAc, beta-D-Gal-(1-&gt;4)-beta-D-GlcNAc-) glycan attached to glycolipids and N- or O-linked glycoproteins. Fucosylates distal type 2 LacNAc and its fucosylated (H-type 2 LacNAc) and sialylated (sialyl-type 2 LacNAc) derivatives to form Lewis x (Lex) (CD15) and Lewis y (Ley) antigenic epitopes involved in cell adhesion and differentiation. Generates Lex epitopes in the brain, presumably playing a role in the maintenance of neuronal stemness and neurite outgrowth in progenitor neural cells. Fucosylates the internal type 2 LacNAc unit of the polylactosamine chain to form VIM-2 antigen that serves as recognition epitope for SELE. Can also modify milk oligosaccharides in particular type 2 tetrasaccharide LNnT. This is 4-galactosyl-N-acetylglucosaminide 3-alpha-L-fucosyltransferase 9 from Canis lupus familiaris (Dog).